Reading from the N-terminus, the 235-residue chain is Ribonuclease PH (235 aa).

Phosphate contacts are provided by residues R86 and 124-126; that span reads GTR.

Belongs to the RNase PH family. In terms of assembly, homohexameric ring arranged as a trimer of dimers.

It catalyses the reaction tRNA(n+1) + phosphate = tRNA(n) + a ribonucleoside 5'-diphosphate. In terms of biological role, phosphorolytic 3'-5' exoribonuclease that plays an important role in tRNA 3'-end maturation. Removes nucleotide residues following the 3'-CCA terminus of tRNAs; can also add nucleotides to the ends of RNA molecules by using nucleoside diphosphates as substrates, but this may not be physiologically important. Probably plays a role in initiation of 16S rRNA degradation (leading to ribosome degradation) during starvation. The chain is Ribonuclease PH from Francisella tularensis subsp. tularensis (strain FSC 198).